Here is a 400-residue protein sequence, read N- to C-terminus: Diphosphomevalonate decarboxylase (400 aa).

Residues 25–28, arginine 80, 155–160, and threonine 211 each bind (R)-5-diphosphomevalonate; these read YWGK and SGSACR.

Belongs to the diphosphomevalonate decarboxylase family. In terms of assembly, homodimer.

It localises to the cytoplasm. It catalyses the reaction (R)-5-diphosphomevalonate + ATP = isopentenyl diphosphate + ADP + phosphate + CO2. It functions in the pathway steroid biosynthesis; cholesterol biosynthesis. Functionally, catalyzes the ATP dependent decarboxylation of (R)-5-diphosphomevalonate to form isopentenyl diphosphate (IPP). Functions in the mevalonate (MVA) pathway leading to isopentenyl diphosphate (IPP), a key precursor for the biosynthesis of isoprenoids and sterol synthesis. The polypeptide is Diphosphomevalonate decarboxylase (mvd) (Danio rerio (Zebrafish)).